Here is a 526-residue protein sequence, read N- to C-terminus: Methyltetrahydroprotoberberine 14-monooxygenase (526 aa).

Residues 14–34 (LLLQYLQPISVALVVIALVWN) traverse the membrane as a helical segment. Cys-468 provides a ligand contact to heme.

It belongs to the cytochrome P450 family. The cofactor is heme. Mainly expressed in roots, and barely in stems, leaves and carpels.

It is found in the membrane. It catalyses the reaction (S)-cis-N-methylcanadine + reduced [NADPH--hemoprotein reductase] + O2 = allocryptopine + oxidized [NADPH--hemoprotein reductase] + H2O + 2 H(+). The catalysed reaction is (S)-cis-N-methylstylopine + reduced [NADPH--hemoprotein reductase] + O2 = protopine + oxidized [NADPH--hemoprotein reductase] + H2O + 2 H(+). It carries out the reaction (S)-cis-N-methyltetrahydrothalifendine + reduced [NADPH--hemoprotein reductase] + O2 = 7-hydroxy-8-methoxy-11-methyl-17,19-dioxa-11-azatetracyclo[12.7.0.0(4,9).0(16,20)]henicosa-1(21),4(9),5,7,14,16(20)-hexaen-2-one + oxidized [NADPH--hemoprotein reductase] + H2O + 2 H(+). The enzyme catalyses (S)-cis-N-methyltetrahydropalmatine + reduced [NADPH--hemoprotein reductase] + O2 = muramine + oxidized [NADPH--hemoprotein reductase] + H2O + 2 H(+). Its pathway is alkaloid biosynthesis. With respect to regulation, repressed by cytochrome P450 inhibitors ketoconazole, metyrapone, prochloraz, ancymidol and cytochrome C. In terms of biological role, involved in the biosynthesis of the isoquinoline alkaloid sanguinarine. Catalyzes the conversion of N-methylated protoberberine alkaloids N-methylstylopine and N-methylcanadine into protopine and allocryptopine, respectively. Can also use (S)-cis-N-methyltetrahydrothalifendine and (S)-cis-N-methyltetrahydropalmatine as substrates. The polypeptide is Methyltetrahydroprotoberberine 14-monooxygenase (Papaver somniferum (Opium poppy)).